A 189-amino-acid polypeptide reads, in one-letter code: Ras-like protein rasC (189 aa).

GTP is bound at residue 11–18 (GDGGVGKS). Residues 33–41 (YDPTIENSY) carry the Effector region motif. Residues 58–62 (DTAGQ) and 117–120 (NKAD) contribute to the GTP site. Cys186 bears the Cysteine methyl ester mark. Residue Cys186 is the site of S-geranylgeranyl cysteine attachment. The propeptide at 187-189 (IIL) is removed in mature form.

This sequence belongs to the small GTPase superfamily. Ras family.

The protein resides in the cell membrane. It carries out the reaction GTP + H2O = GDP + phosphate + H(+). With respect to regulation, alternates between an inactive form bound to GDP and an active form bound to GTP. Activated by a guanine nucleotide-exchange factor (GEF) and inactivated by a GTPase-activating protein (GAP). Functionally, ras proteins bind GDP/GTP and possess intrinsic GTPase activity. The sequence is that of Ras-like protein rasC (rasC) from Dictyostelium discoideum (Social amoeba).